The chain runs to 371 residues: Alanine racemase (371 aa).

The active-site Proton acceptor; specific for D-alanine is the Lys39. Lys39 carries the post-translational modification N6-(pyridoxal phosphate)lysine. A substrate-binding site is contributed by Arg137. Tyr266 serves as the catalytic Proton acceptor; specific for L-alanine. Met314 provides a ligand contact to substrate.

The protein belongs to the alanine racemase family. Requires pyridoxal 5'-phosphate as cofactor.

The enzyme catalyses L-alanine = D-alanine. It functions in the pathway amino-acid biosynthesis; D-alanine biosynthesis; D-alanine from L-alanine: step 1/1. Its function is as follows. Catalyzes the interconversion of L-alanine and D-alanine. May also act on other amino acids. In Desulfovibrio desulfuricans (strain ATCC 27774 / DSM 6949 / MB), this protein is Alanine racemase (alr).